A 175-amino-acid polypeptide reads, in one-letter code: MSYSKIPAGKDLPNDIYVAIEIPANHAPIKYEIDKDTDCLFVDRFMATPMFYPANYGFIPNTLADDGDPLDVLVVTPYPVTPGSVIRARPVGILHMTDDGGGDAKVIAVPHDKLSQLYVDVKEYTDLPALLLEQIKHFFENYKDLEKGKWVKIEGWGNADAARAEIMKSVEAFKG.

Substrate contacts are provided by Lys-30, Arg-44, and Tyr-56. Asp-66, Asp-71, and Asp-103 together coordinate Mg(2+). A substrate-binding site is contributed by Tyr-142.

This sequence belongs to the PPase family. Homohexamer. Requires Mg(2+) as cofactor.

It is found in the cytoplasm. The enzyme catalyses diphosphate + H2O = 2 phosphate + H(+). In terms of biological role, catalyzes the hydrolysis of inorganic pyrophosphate (PPi) forming two phosphate ions. The polypeptide is Inorganic pyrophosphatase 1 (Pseudomonas syringae pv. tomato (strain ATCC BAA-871 / DC3000)).